The sequence spans 350 residues: Heat-inducible transcription repressor HrcA (350 aa).

The protein belongs to the HrcA family.

In terms of biological role, negative regulator of class I heat shock genes (grpE-dnaK-dnaJ and groELS operons). Prevents heat-shock induction of these operons. The polypeptide is Heat-inducible transcription repressor HrcA (Xanthomonas campestris pv. campestris (strain ATCC 33913 / DSM 3586 / NCPPB 528 / LMG 568 / P 25)).